A 452-amino-acid polypeptide reads, in one-letter code: MAEIRQRRVLMVPAPFQGHLPSMMNLASYLSSQGFSITIVRNEFNFKDISHNFPGIKFFTIKDGLSESDVKSLGLLEFVLELNSVCEPLLKEFLTNHDDVVDFIIYDEFVYFPRRVAEDMNLPKMVFSPSSAATSISRCVLMENQSNGLLPPQDARSQLEETVPEFHPFRFKDLPFTAYGSMERLMILYENVSNRASSSGIIHNSSDCLENSFITTAQEKWGVPVYPVGPLHMTNSAMSCPSLFEEERNCLEWLEKQETSSVIYISMGSLAMTQDIEAVEMAMGFVQSNQPFLWVIRPGSINGQESLDFLPEQFNQTVTDGRGFVVKWAPQKEVLRHRAVGGFWNHGGWNSCLESISSGVPMICRPYSGDQRVNTRLMSHVWQTAYEIEGELERGAVEMAVRRLIVDQEGQEMRMRATILKEEVEASVTTEGSSHNSLNNLVHAIMMQIDEQ.

Residues Ser-269, 329-331 (APQ), 346-354 (HGGWNSCLE), and 368-371 (SGDQ) each bind UDP-alpha-D-glucose.

Belongs to the UDP-glycosyltransferase family.

Functionally, possesses low quercetin 7-O-glucosyltransferase activity in vitro. The protein is UDP-glycosyltransferase 76D1 (UGT76D1) of Arabidopsis thaliana (Mouse-ear cress).